Consider the following 380-residue polypeptide: O-antigen polymerase (380 aa).

The next 12 helical transmembrane spans lie at 1–21, 27–47, 55–75, 94–114, 132–152, 169–189, 201–221, 229–249, 282–302, 306–326, 332–352, and 353–373; these read MTYF…RLTP, NIVL…TFNE, ATTL…YILI, YIYW…IILL, SISG…MYLA, FLLA…VYIV, LIYG…LGKF, IISA…AAFN, ILPW…FAPW, LGLY…GIWF, LAVG…FFQE, and HYLL…LLAM.

The protein resides in the cell inner membrane. The catalysed reaction is n lipid-linked O-antigen repeat units = a lipid-linked O antigen + (n-1) polyisoprenyl diphosphate.. Its pathway is bacterial outer membrane biogenesis; LPS O-antigen biosynthesis. In terms of biological role, polymerase involved in the biosynthesis of the lipopolysaccharide (LPS). Catalyzes the polymerization of the O-antigen repeat units on the periplasmic face of the inner membrane, leading to the formation of the lipid-linked O-antigen molecule. The protein is O-antigen polymerase of Shigella dysenteriae.